The sequence spans 289 residues: Probable branched-chain-amino-acid aminotransferase (289 aa).

Lysine 154 carries the post-translational modification N6-(pyridoxal phosphate)lysine.

This sequence belongs to the class-IV pyridoxal-phosphate-dependent aminotransferase family. Pyridoxal 5'-phosphate is required as a cofactor.

It catalyses the reaction L-leucine + 2-oxoglutarate = 4-methyl-2-oxopentanoate + L-glutamate. The catalysed reaction is L-isoleucine + 2-oxoglutarate = (S)-3-methyl-2-oxopentanoate + L-glutamate. The enzyme catalyses L-valine + 2-oxoglutarate = 3-methyl-2-oxobutanoate + L-glutamate. Its pathway is amino-acid biosynthesis; L-isoleucine biosynthesis; L-isoleucine from 2-oxobutanoate: step 4/4. It participates in amino-acid biosynthesis; L-leucine biosynthesis; L-leucine from 3-methyl-2-oxobutanoate: step 4/4. It functions in the pathway amino-acid biosynthesis; L-valine biosynthesis; L-valine from pyruvate: step 4/4. Functionally, acts on leucine, isoleucine and valine. The polypeptide is Probable branched-chain-amino-acid aminotransferase (ilvE) (Rickettsia bellii (strain RML369-C)).